The following is a 344-amino-acid chain: MIVLGIESSCDETGVGVVKLDGEGNLEILADSVASSMQEHARFGGVVPEIASRAHLESMVPVMREALRQAGVDRPDAVAATVGPGLAGALLVGASAAKAYAAAWGVPFYAVNHLGGHVAVANLEGETLPHAVALLVSGGHTQLLEVDAVGLPMKELGSTLDDAAGEAYDKVSRLLGLGYPGGPIIDKLARRGNPEAIAFPRGLMKKSDSRHDFSFSGLKTSVARYVEAAERNGEVISVEDVCASFQEAVCDVLTFKAVRACRDVGAKVLLLGGGVAANSRLRELAQERCDKADIELRVPRFNLCTDNGVMIAALAAQRIHEGAQESPISVGTDPSLSVETPQVF.

Positions 113 and 117 each coordinate Fe cation. Substrate contacts are provided by residues 135 to 139 (LVSGG), Asp169, Gly182, Asp186, and Asn278. Residue Asp306 coordinates Fe cation. The disordered stretch occupies residues 325-344 (ESPISVGTDPSLSVETPQVF). A compositionally biased stretch (polar residues) spans 326–344 (SPISVGTDPSLSVETPQVF).

It belongs to the KAE1 / TsaD family. Requires Fe(2+) as cofactor.

It is found in the cytoplasm. It carries out the reaction L-threonylcarbamoyladenylate + adenosine(37) in tRNA = N(6)-L-threonylcarbamoyladenosine(37) in tRNA + AMP + H(+). Functionally, required for the formation of a threonylcarbamoyl group on adenosine at position 37 (t(6)A37) in tRNAs that read codons beginning with adenine. Is involved in the transfer of the threonylcarbamoyl moiety of threonylcarbamoyl-AMP (TC-AMP) to the N6 group of A37, together with TsaE and TsaB. TsaD likely plays a direct catalytic role in this reaction. The chain is tRNA N6-adenosine threonylcarbamoyltransferase from Corynebacterium glutamicum (strain ATCC 13032 / DSM 20300 / JCM 1318 / BCRC 11384 / CCUG 27702 / LMG 3730 / NBRC 12168 / NCIMB 10025 / NRRL B-2784 / 534).